The following is a 498-amino-acid chain: MASQGTKRSYEQMETDGERQNATEIRASVGKMIDGIGRFYIQMCTELKLSDYEGRLIQNSLTIERMVLSAFDERRNRYLEEHPSAGKDPKKTGGPIYKRVDGKWMRELILYDKEEIRRIWRQANNGDDATRGLTHMMIWHSNLNDTTYQRTRALVRTGMDPRMCSLMQGSTLPRRSGAAGAAVKGVGTMVMELIRMIKRGINDRNFWRGENGRKTRSAYERMCNILKGKFQTAAQRAMMDQVRESRNPGNAEIEDLIFSARSALILRGSVAHKSCLPACVYGPAVASGYDFEKEGYSLVGIDPFKLLQNSQVYSLIRPNENPAHKSQLVWMACHSAAFEDLRLLSFIRGTKVSPRGKLSTRGVQIASNENMDTMESSTLELRSRYWAIRTRSGGNTNQQRASAGQISVQPTFSVQRNLPFDKSTVMAAFTGNTEGRTSDMRAEIIRMMEDAKPEEVSFRGRGVFELSDEKATNPIVPSFDMSNEGSYFFGDNAEEYDN.

The short motif at 1 to 18 (MASQGTKRSYEQMETDGE) is the Unconventional nuclear localization signal element. Residues 1–21 (MASQGTKRSYEQMETDGERQN) form a disordered region. Residues 8–21 (RSYEQMETDGERQN) are compositionally biased toward basic and acidic residues. Residues 198–216 (KRGINDRNFWRGENGRKTR) carry the Bipartite nuclear localization signal motif.

It belongs to the influenza viruses nucleoprotein family. As to quaternary structure, homomultimerizes to form the nucleocapsid. May bind host exportin-1/XPO1. Binds to viral genomic RNA. Protein-RNA contacts are mediated by a combination of electrostatic interactions between positively charged residues and the phosphate backbone and planar interactions between aromatic side chains and bases. Late in virus-infected cells, may be cleaved from a 56-kDa protein to a 53-kDa protein by a cellular caspase. This cleavage might be a marker for the onset of apoptosis in infected cells or have a specific function in virus host interaction.

It localises to the virion. It is found in the host nucleus. Its function is as follows. Encapsidates the negative strand viral RNA, protecting it from nucleases. The encapsidated genomic RNA is termed the ribonucleoprotein (RNP) and serves as template for transcription and replication. The RNP needs to be localized in the host nucleus to start an infectious cycle, but is too large to diffuse through the nuclear pore complex. NP comprises at least 2 nuclear localization signals that are responsible for the active RNP import into the nucleus through cellular importin alpha/beta pathway. Later in the infection, nclear export of RNPs are mediated through viral proteins NEP interacting with M1 which binds nucleoproteins. It is possible that nucleoprotein binds directly host exportin-1/XPO1 and plays an active role in RNPs nuclear export. M1 interaction with RNP seems to hide nucleoprotein's nuclear localization signals. Soon after a virion infects a new cell, M1 dissociates from the RNP under acidification of the virion driven by M2 protein. Dissociation of M1 from RNP unmasks nucleoprotein's nuclear localization signals, targeting the RNP to the nucleus. This chain is Nucleoprotein, found in Aves (Human).